Reading from the N-terminus, the 180-residue chain is Large ribosomal subunit protein uL6 (180 aa).

Belongs to the universal ribosomal protein uL6 family. As to quaternary structure, part of the 50S ribosomal subunit.

This protein binds to the 23S rRNA, and is important in its secondary structure. It is located near the subunit interface in the base of the L7/L12 stalk, and near the tRNA binding site of the peptidyltransferase center. This Anaeromyxobacter sp. (strain K) protein is Large ribosomal subunit protein uL6.